Consider the following 788-residue polypeptide: Cyclin-F (788 aa).

The Nuclear localization signal 1 motif lies at 20 to 28 (KRRIRRRPR). Residues 29 to 76 (NLTILNLPEDALFHILKWLSVGDILAVRAVHSHLKYLVDNHASVWACA) enclose the F-box domain. One can recognise a Cyclin N-terminal domain in the interval 291-405 (HAVNKQRVFS…EVVSALDGKI (115 aa)). Short sequence motifs (d box) lie at residues 310–313 (RYIL), 343–346 (RRRL), 349–352 (RYRL), and 351–354 (RLQL). Disordered regions lie at residues 566-585 (SARRTKRKRENSLQEDRGSF) and 700-788 (TSGY…FLKL). The Nuclear localization signal 2 motif lies at 568–574 (RRTKRKR). Positions 582 to 766 (RGSFVTTPTA…ESCAPQQQVK (185 aa)) are PEST. Composition is skewed to polar residues over residues 700-716 (TSGYSSVNSASPTDSGR) and 723-738 (RSTSELPTGSSLNTQP). A D box 5 motif is present at residues 767 to 770 (RKNL).

The protein belongs to the cyclin family. Cyclin AB subfamily. As to quaternary structure, component of the SCF(CCNF) complex consisting of CUL1, RBX1, SKP1 and CCNF. Interacts with SKP1. Interacts with CUL1. Interacts with CCNB1; interaction is required for nuclear localization of CCNB1. Interacts with CCP110; this interaction leads to CCP110 ubiquitination and degradation via the proteasome pathway. Interacts (via the Cyclin N-terminal domain) with MYBL2/BMYB. Interacts with FZR1/CDH1 (via N-terminus). Interacts with RRM2 (via Cy motif and when phosphorylated at 'Thr-33'); the interaction occurs exclusively in G2 and early M. Interacts with CDC6 (via Cy motif); the interaction takes place during G2 and M phase. In terms of processing, degraded when the spindle assembly checkpoint is activated during the G2-M transition. Degradation is not dependent on the proteasome or ubiquitin and depends on the C-terminal PEST sequence. Phosphorylated just before cells enter into mitosis. Post-translationally, ubiquitinated by the anaphase-promoting complex (APC/C); leading to its degradation by the proteasome.

It is found in the nucleus. The protein resides in the cytoplasm. The protein localises to the perinuclear region. Its subcellular location is the cytoskeleton. It localises to the microtubule organizing center. It is found in the centrosome. The protein resides in the centriole. Functionally, substrate recognition component of a SCF (SKP1-CUL1-F-box protein) E3 ubiquitin-protein ligase complex which mediates the ubiquitination and subsequent proteasomal degradation of target proteins. The SCF(CCNF) E3 ubiquitin-protein ligase complex is an integral component of the ubiquitin proteasome system (UPS) and links proteasome degradation to the cell cycle. Mediates the substrate recognition and the proteasomal degradation of various target proteins involved in the regulation of cell cycle progression and in the maintenance of genome stability. Mediates the ubiquitination and subsequent proteasomal degradation of CP110 during G2 phase, thereby acting as an inhibitor of centrosome reduplication. In G2, mediates the ubiquitination and proteasomal degradation of CDC6, thereby suppressing DNA re-replication and preventing genome instability. Involved in the ubiquitination and degradation of the substrate adapter CDH1 of the anaphase-promoting complex (APC/C), thereby acting as an antagonist of APC/C in regulating G1 progression and S phase entry. May play a role in the G2 cell cycle checkpoint control after DNA damage, possibly by promoting the ubiquitination of MYBL2/BMYB. This Bos taurus (Bovine) protein is Cyclin-F (CCNF).